The sequence spans 392 residues: Caveolae-associated protein 1 (392 aa).

Met1 carries the post-translational modification N-acetylmethionine. Over residues 1-10 (MEDVTLHIVE) the composition is skewed to basic and acidic residues. The tract at residues 1–45 (MEDVTLHIVERPYSGFPDASSEGPEPTQGEARATEEPSGTGSDEL) is disordered. The tract at residues 1 to 100 (MEDVTLHIVE…IQGELSKLGK (100 aa)) is required for homotrimerization and for interaction with CAVIN2 and CAVIN3. A phosphoserine mark is found at Ser21 and Ser38. A Phosphothreonine modification is found at Thr40. A phosphoserine mark is found at Ser42 and Ser48. The interval 54–64 (VLVLSLLDKII) is nuclear export signal. Residues 55–77 (LVLSLLDKIIGAVDQIQLTQAQL) are leucine-zipper 1. A Glycyl lysine isopeptide (Lys-Gly) (interchain with G-Cter in SUMO2) cross-link involves residue Lys118. Phosphoserine is present on Ser120. Residue Lys124 forms a Glycyl lysine isopeptide (Lys-Gly) (interchain with G-Cter in SUMO2) linkage. Residues 138 to 154 (KKLEVNEAELLRRRNFK) are nuclear localization signal. Position 158 is a phosphotyrosine (Tyr158). A Glycyl lysine isopeptide (Lys-Gly) (interchain with G-Cter in SUMO1); alternate cross-link involves residue Lys163. Lys163 is covalently cross-linked (Glycyl lysine isopeptide (Lys-Gly) (interchain with G-Cter in SUMO2); alternate). Residue Lys167 forms a Glycyl lysine isopeptide (Lys-Gly) (interchain with G-Cter in SUMO2) linkage. Positions 168–188 (LSVSKSLKESEALPEKEGDEL) are leucine-zipper 2. Phosphoserine occurs at positions 169 and 171. Lys172 is covalently cross-linked (Glycyl lysine isopeptide (Lys-Gly) (interchain with G-Cter in SUMO2)). A phosphoserine mark is found at Ser173 and Ser177. Positions 173–183 (SLKESEALPEK) are enriched in basic and acidic residues. The interval 173-197 (SLKESEALPEKEGDELGEGERPEDD) is disordered. The segment covering 184–197 (EGDELGEGERPEDD) has biased composition (acidic residues). Phosphothreonine is present on Thr198. Residues 201–284 (IELSSDEAVE…RMNKLGTRLV (84 aa)) are a coiled coil. Ser204 and Ser205 each carry phosphoserine. The segment at 235-251 (KKAFSKEKMEKTKVRTR) is nuclear localization signal. The interval 259 to 299 (LKTKENLEKTRHTLEKRMNKLGTRLVPVERREKLKTSRDKL) is leucine-zipper 3. At Ser302 the chain carries Phosphoserine. Thr304 is modified (phosphothreonine). A Phosphotyrosine modification is found at Tyr310. A Glycyl lysine isopeptide (Lys-Gly) (interchain with G-Cter in SUMO2) cross-link involves residue Lys328. The tract at residues 347–367 (GPEDDEVGAERGEATDLLRGS) is disordered. 5 positions are modified to phosphoserine: Ser367, Ser368, Ser381, Ser389, and Ser391.

This sequence belongs to the CAVIN family. Component of the CAVIN complex composed of CAVIN1, CAVIN2, CAVIN3 and CAVIN4. Homotrimer. Interacts with LIPE in the adipocyte cytoplasm. Interacts with RNA polymerase I subunit POLR1A/RPA1. Interacts with TTF1. Binds the 3' end of pre-rRNA. Interacts with transcription factor ZNF148. Interacts with CAV1, CAVIN2 and CAVIN3. Interacts with CAVIN4. Phosphorylated. Present in active and inactive forms. Changes in phosphorylation pattern may alter activity. Phosphorylation at Tyr-158 is essential for its function in the regulation of the ribosomal transcriptional activity. In terms of processing, monoubiquitinated. Expressed in the heart, stomach, adipose tissue and lung (at protein level). Expressed in testis, kidney, muscle, liver, spleen and brain.

It is found in the membrane. Its subcellular location is the caveola. The protein resides in the cell membrane. The protein localises to the microsome. It localises to the endoplasmic reticulum. It is found in the cytoplasm. Its subcellular location is the cytosol. The protein resides in the mitochondrion. The protein localises to the nucleus. In terms of biological role, plays an important role in caveolae formation and organization. Essential for the formation of caveolae in all tissues. Core component of the CAVIN complex which is essential for recruitment of the complex to the caveolae in presence of calveolin-1 (CAV1). Essential for normal oligomerization of CAV1. Promotes ribosomal transcriptional activity in response to metabolic challenges in the adipocytes and plays an important role in the formation of the ribosomal transcriptional loop. Dissociates transcription complexes paused by DNA-bound TTF1, thereby releasing both RNA polymerase I and pre-RNA from the template. The caveolae biogenesis pathway is required for the secretion of proteins such as GASK1A. This chain is Caveolae-associated protein 1 (Cavin1), found in Mus musculus (Mouse).